Here is a 127-residue protein sequence, read N- to C-terminus: D-ribose pyranase (127 aa).

The active-site Proton donor is the H20. Residues D28, H94, and 116–118 (YSN) each bind substrate.

The protein belongs to the RbsD / FucU family. RbsD subfamily. In terms of assembly, homodecamer.

The protein localises to the cytoplasm. It carries out the reaction beta-D-ribopyranose = beta-D-ribofuranose. Its pathway is carbohydrate metabolism; D-ribose degradation; D-ribose 5-phosphate from beta-D-ribopyranose: step 1/2. In terms of biological role, catalyzes the interconversion of beta-pyran and beta-furan forms of D-ribose. The sequence is that of D-ribose pyranase from Cutibacterium acnes (strain DSM 16379 / KPA171202) (Propionibacterium acnes).